A 58-amino-acid chain; its full sequence is Large ribosomal subunit protein eL20 (58 aa).

The disordered stretch occupies residues T37–A58. Residues P48–A58 show a composition bias toward basic and acidic residues.

This sequence belongs to the eukaryotic ribosomal protein eL20 family. Part of the 50S ribosomal subunit. Binds 23S rRNA.

This is Large ribosomal subunit protein eL20 from Halorubrum lacusprofundi (strain ATCC 49239 / DSM 5036 / JCM 8891 / ACAM 34).